We begin with the raw amino-acid sequence, 137 residues long: Basic phospholipase A2 beta-bungarotoxin A5 chain (137 aa).

The first 9 residues, 1–9 (AVCVSLLGA), serve as a signal peptide directing secretion. A propeptide spanning residues 10–17 (ANIPPQHL) is cleaved from the precursor. 6 disulfide bridges follow: C44–C136, C46–C62, C61–C117, C68–C110, C78–C103, and C96–C108. Positions 45, 47, and 49 each coordinate Ca(2+). H65 is a catalytic residue. D66 lines the Ca(2+) pocket. D111 is an active-site residue.

The protein belongs to the phospholipase A2 family. Group I subfamily. D49 sub-subfamily. As to quaternary structure, heterodimer; disulfide-linked. The A chains have phospholipase A2 activity and the B chains show homology with the basic protease inhibitors. Ca(2+) serves as cofactor. Expressed by the venom gland.

The protein resides in the secreted. It catalyses the reaction a 1,2-diacyl-sn-glycero-3-phosphocholine + H2O = a 1-acyl-sn-glycero-3-phosphocholine + a fatty acid + H(+). Snake venom phospholipase A2 (PLA2) that inhibits neuromuscular transmission by blocking acetylcholine release from the nerve termini. PLA2 catalyzes the calcium-dependent hydrolysis of the 2-acyl groups in 3-sn-phosphoglycerides. This chain is Basic phospholipase A2 beta-bungarotoxin A5 chain, found in Bungarus multicinctus (Many-banded krait).